The following is a 726-amino-acid chain: ORC ubiquitin ligase 1 (726 aa).

The RING-type; degenerate zinc-finger motif lies at 18–56 (CHICLGKVRQPVICINNHVFCSICIDLWLKNNSQCPACR). Coiled-coil stretches lie at residues 87–129 (LRKT…TILD) and 155–270 (ETVA…MNSI). Phosphoserine is present on Ser-210. Disordered regions lie at residues 276–334 (SADG…TSKA) and 436–460 (NVSN…ECFS). Basic and acidic residues predominate over residues 280 to 290 (KGSKGSEEDVV). Residues 304-318 (SSTSSSSHLAKPSSS) show a composition bias toward low complexity. Residues 319–334 (RLCDTSSARQESTSKA) show a composition bias toward polar residues. Residues 446–457 (DISRSENEKKSE) show a composition bias toward basic and acidic residues. 5 positions are modified to phosphoserine: Ser-526, Ser-553, Ser-561, Ser-568, and Ser-570. 2 disordered regions span residues 570-602 (SSQG…DQLE) and 687-726 (QSPW…ATKS). Positions 579 to 588 (EPDKLEEKTE) are enriched in basic and acidic residues. Polar residues predominate over residues 589–602 (LNLSKGSLTNDQLE). Over residues 713–726 (SSLSSASPSKATKS) the composition is skewed to low complexity. A phosphoserine mark is found at Ser-719 and Ser-721.

In terms of assembly, associates with ORC complex. Binds to chromatin; association is cell cycle-regulated, absent from mitotic chromosomes, is associated with chromatin from G1 and partially released from chromatin from mid S-phase. In terms of processing, auto-ubiquitinated.

The protein localises to the chromosome. The catalysed reaction is S-ubiquitinyl-[E2 ubiquitin-conjugating enzyme]-L-cysteine + [acceptor protein]-L-lysine = [E2 ubiquitin-conjugating enzyme]-L-cysteine + N(6)-ubiquitinyl-[acceptor protein]-L-lysine.. E3 ubiquitin ligase essential for DNA replication origin activation during S phase. Acts as a replication origin selector which selects the origins to be fired and catalyzes the multi-mono-ubiquitination of a subset of chromatin-bound ORC3 and ORC5 during S-phase. This Homo sapiens (Human) protein is ORC ubiquitin ligase 1.